The primary structure comprises 408 residues: Succinylornithine transaminase (408 aa).

K252 is subject to N6-(pyridoxal phosphate)lysine.

Belongs to the class-III pyridoxal-phosphate-dependent aminotransferase family. AstC subfamily. Pyridoxal 5'-phosphate is required as a cofactor.

The enzyme catalyses N(2)-succinyl-L-ornithine + 2-oxoglutarate = N-succinyl-L-glutamate 5-semialdehyde + L-glutamate. It functions in the pathway amino-acid degradation; L-arginine degradation via AST pathway; L-glutamate and succinate from L-arginine: step 3/5. Functionally, catalyzes the transamination of N(2)-succinylornithine and alpha-ketoglutarate into N(2)-succinylglutamate semialdehyde and glutamate. Can also act as an acetylornithine aminotransferase. In Salmonella paratyphi A (strain ATCC 9150 / SARB42), this protein is Succinylornithine transaminase.